The following is a 270-amino-acid chain: 25S rRNA adenine-N(1) methyltransferase (270 aa).

S-adenosyl-L-methionine is bound by residues Gly111 and Asp131.

Belongs to the BMT2 family.

The protein resides in the nucleus. It localises to the nucleolus. Its function is as follows. S-adenosyl-L-methionine-dependent methyltransferase that specifically methylates the N(1) position of an adenine present in helix 65 in 25S rRNA. In Schizosaccharomyces pombe (strain 972 / ATCC 24843) (Fission yeast), this protein is 25S rRNA adenine-N(1) methyltransferase.